The chain runs to 451 residues: Chromosomal replication initiator protein DnaA (451 aa).

The domain I, interacts with DnaA modulators stretch occupies residues 1–72; sequence MQSIEDIWQE…ANILQEITGR (72 aa). The interval 72–108 is domain II; the sequence is RLFDVRFIDGEQEENFEYTVIKPNPALDEDGVEIGKH. Residues 109–325 form a domain III, AAA+ region region; sequence MLNPRYVFDT…GALIRVVAYS (217 aa). The ATP site is built by Gly-153, Gly-155, Lys-156, and Thr-157. The tract at residues 326–451 is domain IV, binds dsDNA; sequence SLVNKDITAG…KNLRKAQNMF (126 aa).

It belongs to the DnaA family. As to quaternary structure, oligomerizes as a right-handed, spiral filament on DNA at oriC.

It is found in the cytoplasm. Functionally, plays an essential role in the initiation and regulation of chromosomal replication. ATP-DnaA binds to the origin of replication (oriC) to initiate formation of the DNA replication initiation complex once per cell cycle. Binds the DnaA box (a 9 base pair repeat at the origin) and separates the double-stranded (ds)DNA. Forms a right-handed helical filament on oriC DNA; dsDNA binds to the exterior of the filament while single-stranded (ss)DNA is stabiized in the filament's interior. The ATP-DnaA-oriC complex binds and stabilizes one strand of the AT-rich DNA unwinding element (DUE), permitting loading of DNA polymerase. After initiation quickly degrades to an ADP-DnaA complex that is not apt for DNA replication. Binds acidic phospholipids. This Listeria monocytogenes serotype 4b (strain CLIP80459) protein is Chromosomal replication initiator protein DnaA.